Consider the following 284-residue polypeptide: Four and a half LIM domains protein 5 (284 aa).

The C4-type zinc-finger motif lies at 8–32 (CQYCTASLLGKKYVLKDDSLFCVTC). LIM zinc-binding domains follow at residues 39–100 (NYCE…ECSS), 101–160 (KCFH…KEFA), 161–220 (HYCN…LYAN), and 223–283 (VACS…MDSD).

As to quaternary structure, interacts with CREM (via the third LIM domain). Interacts (via second LIM domain) with SPAG8.

The protein resides in the nucleus. Functionally, may be involved in the regulation of spermatogenesis. Stimulates CREM transcriptional activity in a phosphorylation-independent manner. This chain is Four and a half LIM domains protein 5 (FHL5), found in Macaca fascicularis (Crab-eating macaque).